A 255-amino-acid polypeptide reads, in one-letter code: Large ribosomal subunit protein uL6m (255 aa).

Positions 39–61 (AARRNFSATTTRPSKLGRTPLSI) are disordered.

This sequence belongs to the universal ribosomal protein uL6 family. As to quaternary structure, component of the mitochondrial large ribosomal subunit (mt-LSU). Mature N.crassa 74S mitochondrial ribosomes consist of a small (37S) and a large (54S) subunit. The 37S small subunit contains a 16S ribosomal RNA (16S mt-rRNA) and 32 different proteins. The 54S large subunit contains a 23S rRNA (23S mt-rRNA) and 42 different proteins.

It localises to the mitochondrion. Functionally, component of the mitochondrial ribosome (mitoribosome), a dedicated translation machinery responsible for the synthesis of mitochondrial genome-encoded proteins, including at least some of the essential transmembrane subunits of the mitochondrial respiratory chain. The mitoribosomes are attached to the mitochondrial inner membrane and translation products are cotranslationally integrated into the membrane. This is Large ribosomal subunit protein uL6m (mrpl6) from Neurospora crassa (strain ATCC 24698 / 74-OR23-1A / CBS 708.71 / DSM 1257 / FGSC 987).